The following is a 250-amino-acid chain: Proteasome subunit alpha type-4-A (250 aa).

Glycyl lysine isopeptide (Lys-Gly) (interchain with G-Cter in ubiquitin) cross-links involve residues Lys-40 and Lys-64.

Belongs to the peptidase T1A family. Component of the 20S core complex of the 26S proteasome. The 26S proteasome is composed of a core protease (CP), known as the 20S proteasome, capped at one or both ends by the 19S regulatory particle (RP/PA700). The 20S proteasome core is composed of 28 subunits that are arranged in four stacked rings, resulting in a barrel-shaped structure. The two end rings are each formed by seven alpha subunits, and the two central rings are each formed by seven beta subunits. The catalytic chamber with the active sites is on the inside of the barrel. Ubiquitous low levels, higher expression in siliques and flowers.

The protein resides in the cytoplasm. It localises to the nucleus. Its function is as follows. The proteasome is a multicatalytic proteinase complex which is characterized by its ability to cleave peptides with Arg, Phe, Tyr, Leu, and Glu adjacent to the leaving group at neutral or slightly basic pH. The proteasome has an ATP-dependent proteolytic activity. The protein is Proteasome subunit alpha type-4-A (PAC1) of Arabidopsis thaliana (Mouse-ear cress).